Here is a 130-residue protein sequence, read N- to C-terminus: Holo-[acyl-carrier-protein] synthase (130 aa).

Positions 9 and 58 each coordinate Mg(2+).

It belongs to the P-Pant transferase superfamily. AcpS family. Mg(2+) is required as a cofactor.

It is found in the cytoplasm. The enzyme catalyses apo-[ACP] + CoA = holo-[ACP] + adenosine 3',5'-bisphosphate + H(+). In terms of biological role, transfers the 4'-phosphopantetheine moiety from coenzyme A to a Ser of acyl-carrier-protein. This is Holo-[acyl-carrier-protein] synthase from Mycobacterium leprae (strain Br4923).